A 506-amino-acid chain; its full sequence is Chromodomain Y-like protein 2 (506 aa).

One can recognise a Chromo domain in the interval 7 to 67 (YEVERIVDKR…LHMSKDKRIK (61 aa)). Residues 64–177 (KRIKSGKQSS…RHFGNGSHQP (114 aa)) form a disordered region. Residues 88–98 (KLSHRPSDPGK) show a composition bias toward basic and acidic residues. The segment covering 101–120 (GTSHKRKRINPPLAKPKKGY) has biased composition (basic residues). Positions 133-143 (KTVSYRTTPSG) are enriched in polar residues.

In terms of assembly, interacts (via chromo domain) with histone H3K9me3. As to expression, ubiquitously expressed.

The protein resides in the nucleus. The protein is Chromodomain Y-like protein 2 (CDYL2) of Homo sapiens (Human).